The chain runs to 745 residues: Inhibitor of nuclear factor kappa-B kinase subunit alpha (745 aa).

The Protein kinase domain occupies 15–300 (WEMRERLGTG…IDLTLKQPRC (286 aa)). ATP-binding positions include 21–29 (LGTGGFGNV) and Lys44. Thr23 carries the phosphothreonine; by PKB/AKT1 and SGK1 modification. Asp144 (proton acceptor) is an active-site residue. Ser176 bears the Phosphoserine; by MAP3K14 mark. Ser180 is subject to Phosphoserine; by SGK1. The leucine-zipper stretch occupies residues 455 to 476 (LLRYNANLTKMKNTLISASQQL). The interval 738–743 (LDWSWL) is NEMO-binding.

This sequence belongs to the protein kinase superfamily. Ser/Thr protein kinase family. I-kappa-B kinase subfamily. As to quaternary structure, component of the I-kappa-B-kinase (IKK) core complex consisting of CHUK, IKBKB and IKBKG; probably four alpha/CHUK-beta/IKBKB dimers are associated with four gamma/IKBKG subunits. The IKK core complex seems to associate with regulatory or adapter proteins to form a IKK-signalosome holo-complex. The IKK complex associates with TERF2IP/RAP1, leading to promote IKK-mediated phosphorylation of RELA/p65. Part of a complex composed of NCOA2, NCOA3, CHUK/IKKA, IKBKB, IKBKG and CREBBP. Part of a 70-90 kDa complex at least consisting of CHUK/IKKA, IKBKB, NFKBIA, RELA, ELP1 and MAP3K14. Directly interacts with TRPC4AP. May interact with TRAF2. Interacts with NALP2. May interact with MAVS/IPS1. Interacts with ARRB1 and ARRB2. Interacts with NLRC5; prevents CHUK phosphorylation and kinase activity. Interacts with PIAS1; this interaction induces PIAS1 phosphorylation. Interacts with ZNF268 isoform 2; the interaction is further increased in a TNF-alpha-dependent manner. Interacts with LRRC14. Interacts with SASH1. Directly interacts with DDX3X after the physiological activation of the TLR7 and TLR8 pathways; this interaction enhances CHUK autophosphorylation. Ubiquitinated by TRIM56 via 'Lys-63'-linked ubiquitination, promoting activation of CHUK/IKKA. In terms of processing, phosphorylated by MAP3K14/NIK, AKT and to a lesser extent by MEKK1, and dephosphorylated by PP2A. Autophosphorylated. In terms of tissue distribution, ubiquitous only for isoform 1, isoforms 2 and 3 are expressed predominantly in brain and T-lymphocytes.

Its subcellular location is the cytoplasm. It localises to the nucleus. The catalysed reaction is L-seryl-[I-kappa-B protein] + ATP = O-phospho-L-seryl-[I-kappa-B protein] + ADP + H(+). Its activity is regulated as follows. Activated when phosphorylated and inactivated when dephosphorylated. Functionally, serine kinase that plays an essential role in the NF-kappa-B signaling pathway which is activated by multiple stimuli such as inflammatory cytokines, bacterial or viral products, DNA damages or other cellular stresses. Acts as a part of the canonical IKK complex in the conventional pathway of NF-kappa-B activation and phosphorylates inhibitors of NF-kappa-B on serine residues. These modifications allow polyubiquitination of the inhibitors and subsequent degradation by the proteasome. In turn, free NF-kappa-B is translocated into the nucleus and activates the transcription of hundreds of genes involved in immune response, growth control, or protection against apoptosis. Negatively regulates the pathway by phosphorylating the scaffold protein TAXBP1 and thus promoting the assembly of the A20/TNFAIP3 ubiquitin-editing complex (composed of A20/TNFAIP3, TAX1BP1, and the E3 ligases ITCH and RNF11). Therefore, CHUK plays a key role in the negative feedback of NF-kappa-B canonical signaling to limit inflammatory gene activation. As part of the non-canonical pathway of NF-kappa-B activation, the MAP3K14-activated CHUK/IKKA homodimer phosphorylates NFKB2/p100 associated with RelB, inducing its proteolytic processing to NFKB2/p52 and the formation of NF-kappa-B RelB-p52 complexes. In turn, these complexes regulate genes encoding molecules involved in B-cell survival and lymphoid organogenesis. Also participates in the negative feedback of the non-canonical NF-kappa-B signaling pathway by phosphorylating and destabilizing MAP3K14/NIK. Within the nucleus, phosphorylates CREBBP and consequently increases both its transcriptional and histone acetyltransferase activities. Modulates chromatin accessibility at NF-kappa-B-responsive promoters by phosphorylating histones H3 at 'Ser-10' that are subsequently acetylated at 'Lys-14' by CREBBP. Additionally, phosphorylates the CREBBP-interacting protein NCOA3. Also phosphorylates FOXO3 and may regulate this pro-apoptotic transcription factor. Phosphorylates RIPK1 at 'Ser-25' which represses its kinase activity and consequently prevents TNF-mediated RIPK1-dependent cell death. Phosphorylates AMBRA1 following mitophagy induction, promoting AMBRA1 interaction with ATG8 family proteins and its mitophagic activity. The chain is Inhibitor of nuclear factor kappa-B kinase subunit alpha (Chuk) from Mus musculus (Mouse).